Consider the following 297-residue polypeptide: MTLNTQQEAKTTLRRRASTPLPLSSRGHQPGRLCTAPSAPSQHPRLGQSVSLNPPVRKPSPAQDGWSSESSDSEGSWEALYRVVLLGDPGVGKTSLASLFAEKQDRDPHEQLGGVYERTLSVDGEDTTLVVMDTWEAEKLDESWCQESCLQAGSAYVIVYSIADRSSFESASELRIQLRRTHQANHVPIILVGNKADLARCREVSVEEGRACAVVFDCKFIETSATLQHNVTELFEGVVRQLRLRRQDNAAPETPSPRRRASLGQRARRFLARLTARSARRRALKARSKSCHNLAVL.

Residues 1–10 (MTLNTQQEAK) show a composition bias toward polar residues. Residues 1-73 (MTLNTQQEAK…DGWSSESSDS (73 aa)) are disordered. S51 carries the post-translational modification Phosphoserine. Residues 64–73 (DGWSSESSDS) show a composition bias toward low complexity. Residues 87-94 (GDPGVGKT) and 194-197 (NKAD) contribute to the GTP site. A calmodulin-binding region spans residues 267 to 286 (ARRFLARLTARSARRRALKA).

It belongs to the small GTPase superfamily. RGK family. In vitro, interacts with calmodulin in a calcium-dependent manner. Interacts 14-3-3 family members including YWHAE, YWHAH, YWHAQ, YWHAZ in a phosphorylation-dependent manner. In terms of tissue distribution, high expression in cardiac muscle. Moderate expression in lung, skeletal muscle and kidney. Low levels in spleen and brain.

Functionally, promotes endothelial cell sprouting and actin cytoskeletal reorganization. May be involved in angiogenesis. May function in Ca(2+) signaling. This Mus musculus (Mouse) protein is GTP-binding protein REM 1 (Rem1).